Here is a 487-residue protein sequence, read N- to C-terminus: Glutamyl-tRNA(Gln) amidotransferase subunit A (487 aa).

Active-site charge relay system residues include Lys79 and Ser158. Ser182 acts as the Acyl-ester intermediate in catalysis.

It belongs to the amidase family. GatA subfamily. In terms of assembly, heterotrimer of A, B and C subunits.

It catalyses the reaction L-glutamyl-tRNA(Gln) + L-glutamine + ATP + H2O = L-glutaminyl-tRNA(Gln) + L-glutamate + ADP + phosphate + H(+). In terms of biological role, allows the formation of correctly charged Gln-tRNA(Gln) through the transamidation of misacylated Glu-tRNA(Gln) in organisms which lack glutaminyl-tRNA synthetase. The reaction takes place in the presence of glutamine and ATP through an activated gamma-phospho-Glu-tRNA(Gln). The polypeptide is Glutamyl-tRNA(Gln) amidotransferase subunit A (Ehrlichia chaffeensis (strain ATCC CRL-10679 / Arkansas)).